The chain runs to 182 residues: Keratin, type II cytoskeletal 68 kDa, component IA (182 aa).

An IF rod domain is found at Asp1–Met66. Residues Asp1–Met66 are coil 2B. The H2 subdomain stretch occupies residues Ser67–Ser86. The tract at residues Ser67 to Leu182 is tail. The segment at Ser87–Gly162 is V2 subdomain. Residues Gly104–Gly124 are compositionally biased toward gly residues. A disordered region spans residues Gly104 to Leu182. Low complexity-rich tracts occupy residues Val144–Ser158 and Ser165–Gln176. The tract at residues Arg163–Leu182 is E2 subdomain.

It belongs to the intermediate filament family. Heterotetramer of two type I and two type II keratins.

The sequence is that of Keratin, type II cytoskeletal 68 kDa, component IA from Bos taurus (Bovine).